Here is a 455-residue protein sequence, read N- to C-terminus: Gastric inhibitory polypeptide receptor (455 aa).

Positions Met1–Gln18 are cleaved as a signal peptide. The Extracellular portion of the chain corresponds to Arg19–Gln135. 3 cysteine pairs are disulfide-bonded: Cys43/Cys67, Cys58/Cys100, and Cys81/Cys115. N-linked (GlcNAc...) asparagine glycans are attached at residues Asn59, Asn69, and Asn74. A helical membrane pass occupies residues Val136–Leu158. At Phe159–Arg166 the chain is on the cytoplasmic side. Residues Asn167–Thr186 form a helical membrane-spanning segment. Over Arg187–Arg214 the chain is Extracellular. A helical membrane pass occupies residues Thr215 to His239. Topologically, residues His240 to Gly251 are cytoplasmic. Residues His252–Arg275 form a helical membrane-spanning segment. Over Tyr276 to Lys290 the chain is Extracellular. Residues Ala291–Gly316 form a helical membrane-spanning segment. Over Ile317 to Arg338 the chain is Cytoplasmic. The helical transmembrane segment at Ser339–Glu359 threads the bilayer. Topologically, residues Glu360–Glu374 are extracellular. Residues Ile375–Glu395 traverse the membrane as a helical segment. Topologically, residues Val396–Cys455 are cytoplasmic.

It belongs to the G-protein coupled receptor 2 family. May form homodimers and heterodimers with GLP1R. N-glycosylation is required for cell surface expression and lengthens receptor half-life by preventing degradation in the ER. In terms of tissue distribution, present in the pancreas as well as the gut, adipose tissue, heart, pituitary, and inner layers of the adrenal cortex, whereas it is not found in kidney, spleen, or liver. It is also expressed in several brain regions, including the cerebral cortex, hippocampus, and olfactory bulb.

It localises to the cell membrane. This is a receptor for GIP. The activity of this receptor is mediated by G proteins which activate adenylyl cyclase. The polypeptide is Gastric inhibitory polypeptide receptor (Gipr) (Rattus norvegicus (Rat)).